The following is a 321-amino-acid chain: Hydrolase 3 (321 aa).

The Involved in the stabilization of the negatively charged intermediate by the formation of the oxyanion hole motif lies at 80 to 82; it reads HGA. Residues S172 and D267 contribute to the active site.

The protein belongs to the 'GDXG' lipolytic enzyme family.

The catalysed reaction is dihydroprecondylocarpine acetate + NADPH = (+)-vincadifformine + acetate + NADP(+). The protein operates within alkaloid biosynthesis. Functionally, component of the seco-iridoid and derivatives monoterpenoid indole alkaloids (MIAs, e.g. vincadifformine) biosynthesis pathway. Catalyzes the conversion of O-acetylstemmadenine (OAS) to vincadifformine. May also trigger the formation of additional unknown MIAs. The sequence is that of Hydrolase 3 from Catharanthus roseus (Madagascar periwinkle).